A 492-amino-acid chain; its full sequence is GTPase Obg (492 aa).

The 158-residue stretch at Pro-2 to Val-159 folds into the Obg domain. The 181-residue stretch at Ala-160–Ser-340 folds into the OBG-type G domain. Residues Gly-166–Ser-173, Phe-191–Val-195, Asp-212–Gly-215, Asn-292–Asp-295, and Ser-321–Val-323 each bind GTP. Mg(2+) contacts are provided by Ser-173 and Thr-193. In terms of domain architecture, OCT spans Pro-358–Pro-438. Residues Ser-449 to Thr-492 are disordered. 2 stretches are compositionally biased toward basic and acidic residues: residues Thr-453–Lys-469 and Arg-476–Thr-492.

Belongs to the TRAFAC class OBG-HflX-like GTPase superfamily. OBG GTPase family. In terms of assembly, monomer. Requires Mg(2+) as cofactor.

It is found in the cytoplasm. Functionally, an essential GTPase which binds GTP, GDP and possibly (p)ppGpp with moderate affinity, with high nucleotide exchange rates and a fairly low GTP hydrolysis rate. Plays a role in control of the cell cycle, stress response, ribosome biogenesis and in those bacteria that undergo differentiation, in morphogenesis control. The polypeptide is GTPase Obg (Mycobacterium avium (strain 104)).